Here is a 286-residue protein sequence, read N- to C-terminus: 4-hydroxybenzoate octaprenyltransferase (286 aa).

Transmembrane regions (helical) follow at residues 22–42 (IGTL…EKAM), 45–65 (LSVL…GCVI), 98–118 (LFIV…LYTI), 143–163 (FFLG…TIEA), 213–233 (IIAL…YLSQ), 238–255 (YFIV…QCRL), and 266–286 (NAFL…LFGI).

The protein belongs to the UbiA prenyltransferase family. Requires Mg(2+) as cofactor.

Its subcellular location is the cell inner membrane. It carries out the reaction all-trans-octaprenyl diphosphate + 4-hydroxybenzoate = 4-hydroxy-3-(all-trans-octaprenyl)benzoate + diphosphate. It participates in cofactor biosynthesis; ubiquinone biosynthesis. Catalyzes the prenylation of para-hydroxybenzoate (PHB) with an all-trans polyprenyl group. Mediates the second step in the final reaction sequence of ubiquinone-8 (UQ-8) biosynthesis, which is the condensation of the polyisoprenoid side chain with PHB, generating the first membrane-bound Q intermediate 3-octaprenyl-4-hydroxybenzoate. The sequence is that of 4-hydroxybenzoate octaprenyltransferase from Histophilus somni (strain 2336) (Haemophilus somnus).